The following is a 138-amino-acid chain: Large ribosomal subunit protein uL14 (138 aa).

Belongs to the universal ribosomal protein uL14 family. In terms of assembly, part of the 50S ribosomal subunit. Forms a cluster with proteins L3 and L24e, part of which may contact the 16S rRNA in 2 intersubunit bridges.

Functionally, binds to 23S rRNA. Forms part of two intersubunit bridges in the 70S ribosome. This is Large ribosomal subunit protein uL14 from Hyperthermus butylicus (strain DSM 5456 / JCM 9403 / PLM1-5).